The chain runs to 165 residues: Ribosome maturation factor RimM (165 aa).

Residues 94 to 165 (EDEFYIADLN…YGILNYKREV (72 aa)) form the PRC barrel domain.

It belongs to the RimM family. In terms of assembly, binds ribosomal protein uS19.

The protein resides in the cytoplasm. Functionally, an accessory protein needed during the final step in the assembly of 30S ribosomal subunit, possibly for assembly of the head region. Essential for efficient processing of 16S rRNA. May be needed both before and after RbfA during the maturation of 16S rRNA. It has affinity for free ribosomal 30S subunits but not for 70S ribosomes. This chain is Ribosome maturation factor RimM, found in Rickettsia canadensis (strain McKiel).